A 365-amino-acid chain; its full sequence is 3-isopropylmalate dehydrogenase (365 aa).

Residues Arg-96, Arg-106, Arg-134, and Asp-224 each coordinate substrate. Mg(2+) is bound by residues Asp-224, Asp-248, and Asp-252. 288-300 (GSAPTIAKQNIAN) serves as a coordination point for NAD(+).

The protein belongs to the isocitrate and isopropylmalate dehydrogenases family. LeuB type 1 subfamily. Homodimer. Mg(2+) serves as cofactor. The cofactor is Mn(2+).

Its subcellular location is the cytoplasm. The enzyme catalyses (2R,3S)-3-isopropylmalate + NAD(+) = 4-methyl-2-oxopentanoate + CO2 + NADH. The protein operates within amino-acid biosynthesis; L-leucine biosynthesis; L-leucine from 3-methyl-2-oxobutanoate: step 3/4. Functionally, catalyzes the oxidation of 3-carboxy-2-hydroxy-4-methylpentanoate (3-isopropylmalate) to 3-carboxy-4-methyl-2-oxopentanoate. The product decarboxylates to 4-methyl-2 oxopentanoate. The polypeptide is 3-isopropylmalate dehydrogenase (Dehalococcoides mccartyi (strain ATCC BAA-2266 / KCTC 15142 / 195) (Dehalococcoides ethenogenes (strain 195))).